A 438-amino-acid polypeptide reads, in one-letter code: MRITKIAPAQSFEREFDGIATDKSISHRAAIFALLSSAPCEVEGYLMGEDTLHTLHIARELGLGIEQKGSVLRLIPPRNGICEPHKVLDCGNAGTGMRLFAGLLSGVKGHFVLTGDEYLNARPMKRITEPLSAIGACINGRENNAYAPLSIVGAQLQTFDYKSTIASAQVKSAMILAGLQTAGQSRFYEPLLSRNHTENMLRGMGVHIQERECEDGGYEVVFEGLKETNKQLEAFKFQVPADPSSAFYFAVAACVLGAKVKLKNVLLNKTRIEAFKILESMGAKVAYHHLSSLYEEVGDIEVQGGSLKAVRVDSRIAWLIDEIPALSICFALAKGKSEVYNAKELRVKESDRIRATITNLRVMGIRCEEFDDGFSVYGGELKRARVSSFGDHRIAMSFAIAQLACGGEIEDSECIDVSFPHFLTLLSQITAVENANES.

Residues Lys23, Ser24, and Arg28 each coordinate 3-phosphoshikimate. Lys23 contacts phosphoenolpyruvate. Phosphoenolpyruvate-binding residues include Gly94 and Arg122. Positions 167, 169, 321, and 348 each coordinate 3-phosphoshikimate. Gln169 is a binding site for phosphoenolpyruvate. Residue Asp321 is the Proton acceptor of the active site. Residues Arg352 and Arg393 each coordinate phosphoenolpyruvate.

This sequence belongs to the EPSP synthase family. In terms of assembly, monomer.

It is found in the cytoplasm. The catalysed reaction is 3-phosphoshikimate + phosphoenolpyruvate = 5-O-(1-carboxyvinyl)-3-phosphoshikimate + phosphate. Its pathway is metabolic intermediate biosynthesis; chorismate biosynthesis; chorismate from D-erythrose 4-phosphate and phosphoenolpyruvate: step 6/7. Its function is as follows. Catalyzes the transfer of the enolpyruvyl moiety of phosphoenolpyruvate (PEP) to the 5-hydroxyl of shikimate-3-phosphate (S3P) to produce enolpyruvyl shikimate-3-phosphate and inorganic phosphate. The protein is 3-phosphoshikimate 1-carboxyvinyltransferase of Helicobacter hepaticus (strain ATCC 51449 / 3B1).